Here is a 207-residue protein sequence, read N- to C-terminus: dTTP/UTP pyrophosphatase (207 aa).

Aspartate 86 (proton acceptor) is an active-site residue.

It belongs to the Maf family. YhdE subfamily. It depends on a divalent metal cation as a cofactor.

The protein localises to the cytoplasm. The catalysed reaction is dTTP + H2O = dTMP + diphosphate + H(+). The enzyme catalyses UTP + H2O = UMP + diphosphate + H(+). Functionally, nucleoside triphosphate pyrophosphatase that hydrolyzes dTTP and UTP. May have a dual role in cell division arrest and in preventing the incorporation of modified nucleotides into cellular nucleic acids. This is dTTP/UTP pyrophosphatase from Nitrosospira multiformis (strain ATCC 25196 / NCIMB 11849 / C 71).